The sequence spans 602 residues: MSTPLDHIRNFSIVAHIDHGKSTLADRLIQLTGGLDTREMKDQVLDSMDIERERGITIKAQTVRLSYKAKNGEDYVLNLIDTPGHVDFAYEVSRSLAACEGSLLVVDASQGVEAQTLANVYQAIDNNHEIVVVLNKIDLPAAEPERVKQQIEEVIGIDASDAVEISAKTGLGIEDVLEAIVNKLPAPKEGDRNAPLKAMLVDSWYDSYLGVIVLVRVIDGVLKKGQTIRMMGTGAKYPVERTGVFTPKMVQVDDLGPGELGFITASIKEVADTRVGDTITEDRRPTENILSGFKPAQPVVFCGLFPVDAADFEDLRGAMGKLRLNDASFSFEMETSAALGFGFRCGFLGLLHLEIIQERLEREFNLDLITTAPSVVYRLNMTDGTHKELHNPADMPDVVKIASIEEPWIKATIMTPDDYLGAIMKLCQERRGIQIDLTYVGPRAMITYDLPLNEVVFDFYDRLKSISKGYASFDYNLSDYREGDLVKMSILVNEEPVDALSMLVHRSAAEKRGRALCEKLKELIPQHMFKIPIQAAIGGRIVARETISALRKDVTAKCYGGDVTRKRKLLEKQKESKKRMRQFGKVEIPQEAFIQALKMGDD.

The tr-type G domain maps to 6-188 (DHIRNFSIVA…AIVNKLPAPK (183 aa)). GTP contacts are provided by residues 18–23 (DHGKST) and 135–138 (NKID).

Belongs to the TRAFAC class translation factor GTPase superfamily. Classic translation factor GTPase family. LepA subfamily.

It localises to the cell inner membrane. It catalyses the reaction GTP + H2O = GDP + phosphate + H(+). Its function is as follows. Required for accurate and efficient protein synthesis under certain stress conditions. May act as a fidelity factor of the translation reaction, by catalyzing a one-codon backward translocation of tRNAs on improperly translocated ribosomes. Back-translocation proceeds from a post-translocation (POST) complex to a pre-translocation (PRE) complex, thus giving elongation factor G a second chance to translocate the tRNAs correctly. Binds to ribosomes in a GTP-dependent manner. The polypeptide is Elongation factor 4 (Brucella abortus (strain 2308)).